Consider the following 132-residue polypeptide: Small ribosomal subunit protein uS8 (132 aa).

This sequence belongs to the universal ribosomal protein uS8 family. Part of the 30S ribosomal subunit. Contacts proteins S5 and S12.

One of the primary rRNA binding proteins, it binds directly to 16S rRNA central domain where it helps coordinate assembly of the platform of the 30S subunit. In Roseiflexus castenholzii (strain DSM 13941 / HLO8), this protein is Small ribosomal subunit protein uS8.